A 400-amino-acid chain; its full sequence is Opsin-3 (400 aa).

Residues 1–38 (MYSGNRSGDQGYWEDGAGAEGAAPAGTRSPAPLFSPTA) lie on the Extracellular side of the membrane. A glycan (N-linked (GlcNAc...) asparagine) is linked at Asn-5. The helical transmembrane segment at 39 to 63 (YERLALLLGCLALLGVGGNLLVLLL) threads the bilayer. Over 64 to 75 (YSKFPRLRTPTH) the chain is Cytoplasmic. A helical membrane pass occupies residues 76–100 (LFLVNLSLGDLLVSLFGVTFTFASC). The Extracellular segment spans residues 101–115 (LRNGWVWDAVGCAWD). A disulfide bond links Cys-112 and Cys-186. Residues 116–135 (GFSGSLFGFVSITTLTVLAY) traverse the membrane as a helical segment. Residues 136 to 151 (ERYIRVVHARVINFSW) lie on the Cytoplasmic side of the membrane. A helical transmembrane segment spans residues 152 to 175 (AWRAITYIWLYSLAWAGAPLLGWN). The Extracellular portion of the chain corresponds to 176 to 199 (RYILDIHGLGCTVDWRSKDANDSS). Asn-196 is a glycosylation site (N-linked (GlcNAc...) asparagine). Residues 200–227 (FVLFLFLGCLVVPVGIIAHCYGHILYSV) traverse the membrane as a helical segment. At 228 to 253 (RMLRCVEDLQTIQVIKMLRYEKKVAK) the chain is on the cytoplasmic side. A helical transmembrane segment spans residues 254-277 (MCFLMAFVFLTCWMPYIVTRFLVV). Over 278–285 (NGYGHLVT) the chain is Extracellular. A helical transmembrane segment spans residues 286 to 310 (PTVSIVSYLFAKSSTVYNPVIYIFM). N6-(retinylidene)lysine is present on Lys-297. The Cytoplasmic segment spans residues 311–400 (NRKFRRSLLQ…KVDVIQVRPL (90 aa)). Cys-323 is lipidated: S-palmitoyl cysteine.

This sequence belongs to the G-protein coupled receptor 1 family. Opsin subfamily. In terms of assembly, interacts with MC1R; the interaction results in a decrease in MC1R-mediated cAMP signaling and ultimately a decrease in melanin production in melanocytes. As to expression, expressed in the eye (at protein level). Expressed in tracheal airway smooth muscle. Expressed in brown adipocyte tissue; expression becomes more abundant during differentiation. Strongly expressed in brain. Highly expressed in the preoptic area and paraventricular nucleus of the hypothalamus. Shows highly patterned expression in other regions of the brain, being enriched in selected regions of the cerebral cortex, cerebellar Purkinje cells, a subset of striatal neurons, selected thalamic nuclei, and a subset of interneurons in the ventral horn of the spinal cord.

The protein resides in the cell membrane. The protein localises to the cytoplasm. G-protein coupled receptor which selectively activates G proteins via ultraviolet A (UVA) light-mediated activation in the skin. Binds both 11-cis retinal and all-trans retinal. Regulates melanogenesis in melanocytes via inhibition of alpha-MSH-induced MC1R-mediated cAMP signaling, modulation of calcium flux, regulation of CAMK2 phosphorylation, and subsequently phosphorylation of CREB, p38, ERK and MITF in response to blue light. Plays a role in melanocyte survival through regulation of intracellular calcium levels and subsequent BCL2/RAF1 signaling. Additionally regulates apoptosis via cytochrome c release and subsequent activation of the caspase cascade. Required for TYR and DCT blue light-induced complex formation in melanocytes. Involved in keratinocyte differentiation in response to blue-light. Required for the UVA-mediated induction of calcium and mitogen-activated protein kinase signaling resulting in the expression of MMP1, MMP2, MMP3, MMP9 and TIMP1 in dermal fibroblasts. Plays a role in light-mediated glucose uptake, mitochondrial respiration and fatty acid metabolism in brown adipocyte tissues. May be involved in photorelaxation of airway smooth muscle cells, via blue-light dependent GPCR signaling pathways. In Mus musculus (Mouse), this protein is Opsin-3 (Opn3).